Consider the following 283-residue polypeptide: tRNA dimethylallyltransferase (283 aa).

Residues 5 to 8 (DSML) are interaction with substrate tRNA.

This sequence belongs to the IPP transferase family. In terms of assembly, monomer. The cofactor is Mg(2+).

It carries out the reaction adenosine(37) in tRNA + dimethylallyl diphosphate = N(6)-dimethylallyladenosine(37) in tRNA + diphosphate. In terms of biological role, catalyzes the transfer of a dimethylallyl group onto the adenine at position 37 in tRNAs that read codons beginning with uridine, leading to the formation of N6-(dimethylallyl)adenosine (i(6)A). This chain is tRNA dimethylallyltransferase, found in Desulforamulus reducens (strain ATCC BAA-1160 / DSM 100696 / MI-1) (Desulfotomaculum reducens).